Reading from the N-terminus, the 93-residue chain is Small ribosomal subunit protein uS19 (93 aa).

It belongs to the universal ribosomal protein uS19 family.

In terms of biological role, protein S19 forms a complex with S13 that binds strongly to the 16S ribosomal RNA. The polypeptide is Small ribosomal subunit protein uS19 (Tropheryma whipplei (strain TW08/27) (Whipple's bacillus)).